We begin with the raw amino-acid sequence, 85 residues long: MAHKKGVGSSRNGRDSNPKMLGVKRFGGERVKPGMIIVRQRGTKFKPGANVGLGRDYTIYSLIDGVVTFEQHSRNQKRVSVYAAE.

A disordered region spans residues 1-25 (MAHKKGVGSSRNGRDSNPKMLGVKR).

The protein belongs to the bacterial ribosomal protein bL27 family.

The protein is Large ribosomal subunit protein bL27 of Roseiflexus castenholzii (strain DSM 13941 / HLO8).